The following is a 103-amino-acid chain: Sec-independent protein translocase protein TatA (103 aa).

The chain crosses the membrane as a helical span at residues Met-1–Phe-21. Residues Tyr-60–Lys-103 form a disordered region.

This sequence belongs to the TatA/E family. The Tat system comprises two distinct complexes: a TatABC complex, containing multiple copies of TatA, TatB and TatC subunits, and a separate TatA complex, containing only TatA subunits. Substrates initially bind to the TatABC complex, which probably triggers association of the separate TatA complex to form the active translocon.

Its subcellular location is the cell inner membrane. In terms of biological role, part of the twin-arginine translocation (Tat) system that transports large folded proteins containing a characteristic twin-arginine motif in their signal peptide across membranes. TatA could form the protein-conducting channel of the Tat system. This Bartonella quintana (strain Toulouse) (Rochalimaea quintana) protein is Sec-independent protein translocase protein TatA.